The following is a 78-amino-acid chain: MSSIEERVKKIVVEQLGVEEDQVTADASFIDDLGADSLDTVELVMALEEEFDCEIPDEEAEKISTLAQATSYVEANLD.

The Carrier domain maps to 2–77 (SSIEERVKKI…QATSYVEANL (76 aa)). The residue at position 37 (Ser-37) is an O-(pantetheine 4'-phosphoryl)serine.

The protein belongs to the acyl carrier protein (ACP) family. 4'-phosphopantetheine is transferred from CoA to a specific serine of apo-ACP by AcpS. This modification is essential for activity because fatty acids are bound in thioester linkage to the sulfhydryl of the prosthetic group.

It localises to the cytoplasm. The protein operates within lipid metabolism; fatty acid biosynthesis. Its function is as follows. Carrier of the growing fatty acid chain in fatty acid biosynthesis. The polypeptide is Acyl carrier protein (Hydrogenovibrio crunogenus (strain DSM 25203 / XCL-2) (Thiomicrospira crunogena)).